The sequence spans 145 residues: 3-hydroxyacyl-[acyl-carrier-protein] dehydratase FabZ (145 aa).

Residue His-49 is part of the active site.

This sequence belongs to the thioester dehydratase family. FabZ subfamily.

It is found in the cytoplasm. The catalysed reaction is a (3R)-hydroxyacyl-[ACP] = a (2E)-enoyl-[ACP] + H2O. Its function is as follows. Involved in unsaturated fatty acids biosynthesis. Catalyzes the dehydration of short chain beta-hydroxyacyl-ACPs and long chain saturated and unsaturated beta-hydroxyacyl-ACPs. The polypeptide is 3-hydroxyacyl-[acyl-carrier-protein] dehydratase FabZ (Rickettsia typhi (strain ATCC VR-144 / Wilmington)).